The sequence spans 93 residues: Phosphoribosyl-ATP pyrophosphatase (93 aa).

This sequence belongs to the PRA-PH family.

It localises to the cytoplasm. The catalysed reaction is 1-(5-phospho-beta-D-ribosyl)-ATP + H2O = 1-(5-phospho-beta-D-ribosyl)-5'-AMP + diphosphate + H(+). The protein operates within amino-acid biosynthesis; L-histidine biosynthesis; L-histidine from 5-phospho-alpha-D-ribose 1-diphosphate: step 2/9. The protein is Phosphoribosyl-ATP pyrophosphatase of Rhodococcus erythropolis (strain PR4 / NBRC 100887).